Consider the following 124-residue polypeptide: Small ribosomal subunit protein bS6 (124 aa).

Residues 97–124 form a disordered region; that stretch reads TGPSPMMKEVQREEAKKAAAAQPTEAQA. Positions 114-124 are enriched in low complexity; it reads AAAAQPTEAQA.

This sequence belongs to the bacterial ribosomal protein bS6 family.

Its function is as follows. Binds together with bS18 to 16S ribosomal RNA. This chain is Small ribosomal subunit protein bS6, found in Paraburkholderia phymatum (strain DSM 17167 / CIP 108236 / LMG 21445 / STM815) (Burkholderia phymatum).